The primary structure comprises 395 residues: Elongation factor Tu (395 aa).

In terms of domain architecture, tr-type G spans 10-205; that stretch reads KPHVNIGTIG…VDNWIPIPPR (196 aa). The G1 stretch occupies residues 19–26; it reads GHVDHGKT. GTP is bound at residue 19–26; sequence GHVDHGKT. Position 26 (T26) interacts with Mg(2+). The interval 60 to 64 is G2; the sequence is GITIN. Residues 81-84 form a G3 region; that stretch reads DCPG. GTP contacts are provided by residues 81–85 and 136–139; these read DCPGH and NKVD. The interval 136 to 139 is G4; that stretch reads NKVD. Residues 174-176 form a G5 region; it reads SAL.

It belongs to the TRAFAC class translation factor GTPase superfamily. Classic translation factor GTPase family. EF-Tu/EF-1A subfamily. In terms of assembly, monomer.

It is found in the cytoplasm. The catalysed reaction is GTP + H2O = GDP + phosphate + H(+). Its function is as follows. GTP hydrolase that promotes the GTP-dependent binding of aminoacyl-tRNA to the A-site of ribosomes during protein biosynthesis. This is Elongation factor Tu from Hymenobacter ocellatus (Parahymenobacter ocellatus).